We begin with the raw amino-acid sequence, 310 residues long: uncharacterized protein (310 aa).

Residues 1 to 70 form a disordered region; the sequence is MAGNSQRRGA…ARGRTDETET (70 aa). The span at 49–62 shows a compositional bias: basic residues; the sequence is AAKRAKAQQRRPAR. S-adenosyl-L-methionine contacts are provided by G262, V282, and L291.

The protein belongs to the class IV-like SAM-binding methyltransferase superfamily. RNA methyltransferase TrmH family.

This is an uncharacterized protein from Mycobacterium ulcerans (strain Agy99).